The chain runs to 656 residues: tRNA 5-methylaminomethyl-2-thiouridine biosynthesis bifunctional protein MnmC (656 aa).

Residues methionine 1–alanine 236 form a tRNA (mnm(5)s(2)U34)-methyltransferase region. Residues isoleucine 260–serine 656 are FAD-dependent cmnm(5)s(2)U34 oxidoreductase.

This sequence in the N-terminal section; belongs to the methyltransferase superfamily. tRNA (mnm(5)s(2)U34)-methyltransferase family. The protein in the C-terminal section; belongs to the DAO family. FAD is required as a cofactor.

The protein resides in the cytoplasm. It carries out the reaction 5-aminomethyl-2-thiouridine(34) in tRNA + S-adenosyl-L-methionine = 5-methylaminomethyl-2-thiouridine(34) in tRNA + S-adenosyl-L-homocysteine + H(+). In terms of biological role, catalyzes the last two steps in the biosynthesis of 5-methylaminomethyl-2-thiouridine (mnm(5)s(2)U) at the wobble position (U34) in tRNA. Catalyzes the FAD-dependent demodification of cmnm(5)s(2)U34 to nm(5)s(2)U34, followed by the transfer of a methyl group from S-adenosyl-L-methionine to nm(5)s(2)U34, to form mnm(5)s(2)U34. The polypeptide is tRNA 5-methylaminomethyl-2-thiouridine biosynthesis bifunctional protein MnmC (Paraburkholderia xenovorans (strain LB400)).